The chain runs to 497 residues: MSSVLNPSSPHSWDLCCSSSSNRSYHRPTHPIVGLLVGQLSVVLLIGAFIKFFIFGEAPPSPSRSQTHRTSQHKRSYSIHGARDLSPRTLKEKPSSNVLRPVPSSSTNTRSILRKTYYSANPTNFPSKHGRHRPHHSTHQPESLDWFNVLIAQTIAQYRQTAYILKDSPTASILESLATTLNNPEKKPSFIDEITVTDISLGEEFPIFSNCRVIAIDDPNSDGGRLQALMDVDLSDDNLSLAIETNLVLNYPKPYSAILPVALSVSVVRFSGTLCISFVPGTTESSTNLTPTSSNIDTNLRSNELRGKTAPQESSTTDEGSQGGATSTTGIPKTSLAFSFLPDYRLDLSVRSLIGSRSRLQDVPKVAQLVEARVHAWFEERVVEPRVQVVALPGIWPRMGRTGVRGQEEQPDVSSSDAAGVSGAKVSMLGSRDTGAEMLHAAREVDAEGLRYRRNPPPGDKGSSSKYAQQNQSSRERGRADDPFRIPGSLPDAVPIT.

Over 1-28 (MSSVLNPSSPHSWDLCCSSSSNRSYHRP) the chain is Lumenal. A helical transmembrane segment spans residues 29-55 (THPIVGLLVGQLSVVLLIGAFIKFFIF). The Cytoplasmic portion of the chain corresponds to 56 to 497 (GEAPPSPSRS…GSLPDAVPIT (442 aa)). Disordered regions lie at residues 60–107 (PSPS…SSST), 284–330 (ESST…STTG), 402–421 (TGVRGQEEQPDVSSSDAAGV), and 437–497 (EMLH…VPIT). Positions 66–77 (QTHRTSQHKRSY) are enriched in basic residues. Residues 81–94 (GARDLSPRTLKEKP) are compositionally biased toward basic and acidic residues. Polar residues-rich tracts occupy residues 95-107 (SSNVLRPVPSSST), 284-302 (ESSTNLTPTSSNIDTNLRS), and 311-330 (PQESSTTDEGSQGGATSTTG). In terms of domain architecture, SMP-LTD spans 140–393 (QPESLDWFNV…EPRVQVVALP (254 aa)). A compositionally biased stretch (low complexity) spans 412–421 (DVSSSDAAGV). The segment covering 440–451 (HAAREVDAEGLR) has biased composition (basic and acidic residues). Polar residues predominate over residues 462 to 473 (GSSSKYAQQNQS). Residues 474-484 (SRERGRADDPF) are compositionally biased toward basic and acidic residues.

Belongs to the MMM1 family. As to quaternary structure, homodimer. Component of the ER-mitochondria encounter structure (ERMES) or MDM complex, composed of MMM1, MDM10, MDM12 and MDM34. An MMM1 homodimer associates with one molecule of MDM12 on each side in a pairwise head-to-tail manner, and the SMP-LTD domains of MMM1 and MDM12 generate a continuous hydrophobic tunnel for phospholipid trafficking.

The protein resides in the endoplasmic reticulum membrane. In terms of biological role, component of the ERMES/MDM complex, which serves as a molecular tether to connect the endoplasmic reticulum (ER) and mitochondria. Components of this complex are involved in the control of mitochondrial shape and protein biogenesis, and function in nonvesicular lipid trafficking between the ER and mitochondria. The MDM12-MMM1 subcomplex functions in the major beta-barrel assembly pathway that is responsible for biogenesis of all outer membrane beta-barrel proteins, and acts in a late step after the SAM complex. The MDM10-MDM12-MMM1 subcomplex further acts in the TOM40-specific pathway after the action of the MDM12-MMM1 complex. Essential for establishing and maintaining the structure of mitochondria and maintenance of mtDNA nucleoids. This is Maintenance of mitochondrial morphology protein 1 from Uncinocarpus reesii (strain UAMH 1704).